Reading from the N-terminus, the 495-residue chain is Thiosulfate sulfurtransferase/rhodanese-like domain-containing protein 2 (495 aa).

The residue at position 268 (serine 268) is a Phosphoserine. The region spanning 300 to 395 (EQGNTIILDC…YLEEFPDGFY (96 aa)) is the Rhodanese domain. Cysteine 354 acts as the Cysteine persulfide intermediate in catalysis.

In Mus musculus (Mouse), this protein is Thiosulfate sulfurtransferase/rhodanese-like domain-containing protein 2 (Tstd2).